We begin with the raw amino-acid sequence, 398 residues long: NADH-ubiquinone oxidoreductase 49 kDa subunit (398 aa).

It belongs to the complex I 49 kDa subunit family.

It is found in the mitochondrion. It carries out the reaction a ubiquinone + NADH + 5 H(+)(in) = a ubiquinol + NAD(+) + 4 H(+)(out). Core subunit of the mitochondrial membrane respiratory chain NADH dehydrogenase (Complex I) that is believed to belong to the minimal assembly required for catalysis. Complex I functions in the transfer of electrons from NADH to the respiratory chain. The immediate electron acceptor for the enzyme is believed to be ubiquinone. Component of the iron-sulfur (IP) fragment of the enzyme. Component of the iron-sulfur (IP) fragment of the enzyme. The polypeptide is NADH-ubiquinone oxidoreductase 49 kDa subunit (NAD7) (Pylaiella littoralis (Seaweed)).